A 123-amino-acid chain; its full sequence is MNINYYYCYKSICSWIFLNKLDLPVIYKTSSFDISPACDSMSCSPAIARVEKSLDQKFPIENLDLKSEIPCDSISGGVHFFNINELRTTLTELNAIAKPASIGGRVMPQGMSTPIAIGIMNIL.

This is an uncharacterized protein from Saccharomyces cerevisiae (strain ATCC 204508 / S288c) (Baker's yeast).